The following is a 196-amino-acid chain: Gastrula zinc finger protein xLCGF3.1 (196 aa).

7 consecutive C2H2-type zinc fingers follow at residues 6–28, 34–56, 62–84, 90–112, 118–140, 146–168, and 174–196; these read FMCT…HMTH, FTCT…QTIH, FTCI…YMTH, FTCT…QTMH, LTCT…QRVH, FTCT…QTVH, and FTCT…QIVH.

The protein belongs to the krueppel C2H2-type zinc-finger protein family.

The protein resides in the nucleus. In terms of biological role, may be involved in transcriptional regulation. The sequence is that of Gastrula zinc finger protein xLCGF3.1 from Xenopus laevis (African clawed frog).